The sequence spans 573 residues: DNA damage-binding protein CMR1 (573 aa).

The segment at 27–94 (DSLNDSISRE…EMEKAEERKR (68 aa)) is disordered. Positions 72–152 (TMEDSEEDKQ…EEIKKEEDST (81 aa)) form a coiled coil. A compositionally biased stretch (basic and acidic residues) spans 79-94 (DKQMREEMEKAEERKR). WD repeat units follow at residues 218–259 (ITQQ…DDET), 268–308 (PHGK…STEV), 319–357 (DYPL…KQGE), 361–401 (LHDK…QKNS), 418–456 (HSRL…KLPL), 495–538 (GRWV…LCHL), and 542–573 (DRMT…YLFE).

The protein belongs to the WD repeat DDB2/WDR76 family.

Its function is as follows. DNA-binding protein that binds to both single- and double-stranded DNA. Binds preferentially to UV-damaged DNA. May be involved in DNA-metabolic processes. This is DNA damage-binding protein CMR1 from Meyerozyma guilliermondii (strain ATCC 6260 / CBS 566 / DSM 6381 / JCM 1539 / NBRC 10279 / NRRL Y-324) (Yeast).